The primary structure comprises 565 residues: MNQTRVLLIFSWLTVATLLWMDWGKNKNETLEISASHNLGVDSHLELEHAVPQINAGAVPVQKDSQLIAAAPKVPVINVTTDVLQLKLDGFSILAADLLRFPQSKDRGAKPIKLLTDDPNYPYSATTGWVSQSNSPVPNLSTFLPEQSGVSYKLANDQDRLVVPFVWTAANGVSIRRTFTFERGRYAILIRDEIRNSGETPWNAYVFRKLSRVPIPNILNRAMTNPDSFSFNGAVWYSEKGGYERRAFKDYMNDGGLNREIGGGWIALLQHHFFTAWIPQKDQASLYLLAQNGSRDIAELRGPAFTVAPGQSTMTEARLWVGPKLVEQITKEHVKGLDRVVDYSRFQLMALIGQGLFWILSHLNSLLHNWGWAIVGLVVLLRIAMYPLSAAQYKSAAKMRKFQPRLQQLKERYGEDRQKFQQAMMELYKKEKINPMGGCFPILIQMPIFFALYWVLVESVELRQAPWLGWIQDLTTRDPYFILPLLNIVIMWATQKLTPTPAGMDPIAGKMMQVMPLIFGVMMAFVPSGLALYWVINGGLNLLIQWWMIHQYADFSRKRSRENIK.

Transmembrane regions (helical) follow at residues 6–26 (VLLIFSWLTVATLLWMDWGKN), 348–368 (LMALIGQGLFWILSHLNSLLH), 370–390 (WGWAIVGLVVLLRIAMYPLSA), 437–457 (GGCFPILIQMPIFFALYWVLV), 479–499 (PYFILPLLNIVIMWATQKLTP), and 516–536 (PLIFGVMMAFVPSGLALYWVI).

This sequence belongs to the OXA1/ALB3/YidC family. Type 1 subfamily. As to quaternary structure, interacts with the Sec translocase complex via SecD. Specifically interacts with transmembrane segments of nascent integral membrane proteins during membrane integration.

It localises to the cell inner membrane. Required for the insertion and/or proper folding and/or complex formation of integral membrane proteins into the membrane. Involved in integration of membrane proteins that insert both dependently and independently of the Sec translocase complex, as well as at least some lipoproteins. Aids folding of multispanning membrane proteins. This is Membrane protein insertase YidC from Xylella fastidiosa (strain M12).